The following is a 297-amino-acid chain: Protoheme IX farnesyltransferase 1 (297 aa).

A run of 9 helical transmembrane segments spans residues 23–43, 45–65, 93–113, 117–137, 145–165, 171–191, 216–236, 241–261, and 277–297; these read VVVL…RAGV, WSVL…AAVV, LPAL…LLAF, LTAW…TGFL, IVIG…AVSG, PLLL…ALAI, LHIL…YAIH, LYLA…WVLY, and IAYL…LLNL.

It belongs to the UbiA prenyltransferase family. Protoheme IX farnesyltransferase subfamily.

The protein resides in the cell inner membrane. The enzyme catalyses heme b + (2E,6E)-farnesyl diphosphate + H2O = Fe(II)-heme o + diphosphate. The protein operates within porphyrin-containing compound metabolism; heme O biosynthesis; heme O from protoheme: step 1/1. Functionally, converts heme B (protoheme IX) to heme O by substitution of the vinyl group on carbon 2 of heme B porphyrin ring with a hydroxyethyl farnesyl side group. The polypeptide is Protoheme IX farnesyltransferase 1 (Pseudomonas putida (strain GB-1)).